Reading from the N-terminus, the 220-residue chain is Deoxyribose-phosphate aldolase 2 (220 aa).

The active-site Proton donor/acceptor is the D89. Residue K151 is the Schiff-base intermediate with acetaldehyde of the active site. K180 serves as the catalytic Proton donor/acceptor.

This sequence belongs to the DeoC/FbaB aldolase family. DeoC type 1 subfamily.

It is found in the cytoplasm. It catalyses the reaction 2-deoxy-D-ribose 5-phosphate = D-glyceraldehyde 3-phosphate + acetaldehyde. Its pathway is carbohydrate degradation; 2-deoxy-D-ribose 1-phosphate degradation; D-glyceraldehyde 3-phosphate and acetaldehyde from 2-deoxy-alpha-D-ribose 1-phosphate: step 2/2. Functionally, catalyzes a reversible aldol reaction between acetaldehyde and D-glyceraldehyde 3-phosphate to generate 2-deoxy-D-ribose 5-phosphate. This Staphylococcus aureus (strain N315) protein is Deoxyribose-phosphate aldolase 2.